Consider the following 123-residue polypeptide: WAP four-disulfide core domain protein 5 (123 aa).

A signal peptide spans 1 to 24; it reads MRFWSLFLLVVLLAVGGQLPAASG. WAP domains lie at 27–74 and 75–121; these read KGER…VPRI and LVKR…RDPA. 8 disulfides stabilise this stretch: C34–C62, C41–C66, C49–C61, C55–C70, C81–C109, C88–C113, C96–C108, and C102–C117.

It is found in the secreted. Putative acid-stable proteinase inhibitor. The chain is WAP four-disulfide core domain protein 5 (WFDC5) from Lemur catta (Ring-tailed lemur).